We begin with the raw amino-acid sequence, 241 residues long: Bidirectional sugar transporter SWEET17 (241 aa).

At 1 to 3 (MAE) the chain is on the vacuolar side. The helical transmembrane segment at 4–24 (ASFYIGVIGNVISVLVFLSPV) threads the bilayer. Residues 6–92 (FYIGVIGNVI…SLFLFYAPRH (87 aa)) form the MtN3/slv 1 domain. Residues 25-41 (ETFWKIVKRRSTEEYKS) lie on the Cytoplasmic side of the membrane. A helical transmembrane segment spans residues 42-62 (LPYICTLLGSSLWTYYGIVTP). At 63-69 (GEYLVST) the chain is on the vacuolar side. The helical transmembrane segment at 70–90 (VNGFGALVETIYVSLFLFYAP) threads the bilayer. Topologically, residues 91-94 (RHLK) are cytoplasmic. The helical transmembrane segment at 95–115 (LKTVDVDAMLNVFFPIAAIVA) threads the bilayer. Residues 116–128 (TRSAFEDEKMRSQ) lie on the Vacuolar side of the membrane. A helical membrane pass occupies residues 129–149 (SIGFISAGLNIIMYGSPLSAM). Residues 129 to 212 (SIGFISAGLN…LILYGIYRNA (84 aa)) enclose the MtN3/slv 2 domain. Topologically, residues 150–161 (KTVVTTKSVKYM) are cytoplasmic. Residues 162–182 (PFWLSFFLFLNGAIWAVYALL) traverse the membrane as a helical segment. The Vacuolar segment spans residues 183–185 (QHD). The helical transmembrane segment at 186–206 (VFLLVPNGVGFVFGTMQLILY) threads the bilayer. Residues 207-241 (GIYRNAKPVGLSNGLSEIAQDEEEGLTSRVEPLLS) lie on the Cytoplasmic side of the membrane.

Belongs to the SWEET sugar transporter family. Forms homooligomers and heterooligomers with SWEET1, SWEET2, SWEET3, SWEET4, SWEET6, SWEET7, SWEET8, SWEET9, SWEET11, SWEET12, SWEET13, SWEET15 and SWEET16. Expressed in leaves at low levels, mostly in xylem and parenchyma. Highly expressed in the cortex of roots, predominantly in tips and mature regions, especially in tonoplasts. Also accumulates in cotyledons, stems, flowers, and siliques.

It localises to the vacuole membrane. Functionally, acts as a vacuolar hexose transporter. Regulates fructose (Fru) homeostasis in leaves and roots by exporting/importing Fru through the tonoplast regarding metabolic demand. The sequence is that of Bidirectional sugar transporter SWEET17 from Arabidopsis thaliana (Mouse-ear cress).